A 112-amino-acid chain; its full sequence is Protein lin-52 homolog (112 aa).

This sequence belongs to the lin-52 family. As to quaternary structure, component of the DREAM complex.

In Tetraodon nigroviridis (Spotted green pufferfish), this protein is Protein lin-52 homolog (lin52).